Consider the following 288-residue polypeptide: Syntaxin-1A (288 aa).

The Cytoplasmic portion of the chain corresponds to 1–265 (MKDRTQELRT…KYQSKARRKK (265 aa)). Phosphoserine occurs at positions 14, 64, and 95. The stretch at 68–109 (DEKTKEELEELMSDIKKTANKVRSKLKSIEQSIEQEEGLNRS) forms a coiled coil. Ser188 is subject to Phosphoserine; by DAPK1. A t-SNARE coiled-coil homology domain is found at 192 to 254 (LSEIETRHSE…ERAVSDTKKA (63 aa)). Glycyl lysine isopeptide (Lys-Gly) (interchain with G-Cter in SUMO) cross-links involve residues Lys252, Lys253, and Lys256. The helical; Anchor for type IV membrane protein transmembrane segment at 266–286 (IMIIICCVIPGIVIASTVGGI) threads the bilayer. The Extracellular segment spans residues 287 to 288 (FA).

Belongs to the syntaxin family. In terms of assembly, part of the SNARE core complex containing SNAP25, VAMP2 and STX1A; this complex constitutes the basic catalytic machinery of the complex neurotransmitter release apparatus. The SNARE complex interacts with CPLX1. Interacts with STXBP1. The interaction with STXBP1 promotes assembly of the SNARE complex. Interacts (via C-terminus) with KCNB1 (via C-terminus); the interaction increases in a calcium-dependent manner and induces a pore-independent enhancement of exocytosis in neuroendocrine cells, chromaffin cells, pancreatic beta cells and from the soma of dorsal root ganglia (DRG) neurons. Interacts with SYTL4. Interacts with STXBP6. Interacts with PLCL1 (via C2 domain). Interacts with OTOF. Interacts with LGI3. Interacts (via the H3 domain) with SLC6A4 (via the N-terminus); this interaction regulates SLC4A6 channel conductance in thalamocortical neurons. Interacts with SYT6 and SYT8; the interaction is Ca(2+)-dependent. Interacts with VAMP8. Interacts with SNAP23. Interacts with VAPA and SYBU. Interacts with PRRT2. Interacts with SEPT8. Interacts with STXBP5L. Interacts with synaptotagmin-1/SYT1. Interacts with SEPTIN5; in the cerebellar cortex. Interacts with SEPTIN4; in the striatum. Post-translationally, phosphorylated by CK2. Phosphorylation at Ser-188 by DAPK1 significantly decreases its interaction with STXBP1. Sumoylated, sumoylation is required for regulation of synaptic vesicle endocytosis.

The protein localises to the cytoplasmic vesicle. Its subcellular location is the secretory vesicle. It is found in the synaptic vesicle membrane. It localises to the cell membrane. The protein resides in the synapse. The protein localises to the synaptosome. In terms of biological role, plays an essential role in hormone and neurotransmitter calcium-dependent exocytosis and endocytosis. Part of the SNARE (Soluble NSF Attachment Receptor) complex composed of SNAP25, STX1A and VAMP2 which mediates the fusion of synaptic vesicles with the presynaptic plasma membrane. STX1A and SNAP25 are localized on the plasma membrane while VAMP2 resides in synaptic vesicles. The pairing of the three SNAREs from the N-terminal SNARE motifs to the C-terminal anchors leads to the formation of the SNARE complex, which brings membranes into close proximity and results in final fusion. Participates in the calcium-dependent regulation of acrosomal exocytosis in sperm. Also plays an important role in the exocytosis of hormones such as insulin or glucagon-like peptide 1 (GLP-1). This is Syntaxin-1A (STX1A) from Pongo abelii (Sumatran orangutan).